Consider the following 99-residue polypeptide: MEPEQMLEGQTQVAENPHSEYGLTDNVERIVENEKINAEKSSKQKVDLQSLPTRAYLDQTVVPILLQGLAVLAKERPPNPIEFLASYLLKNKAQFEDRN.

At Met-1 the chain carries N-acetylmethionine. A disordered region spans residues 1–26; that stretch reads MEPEQMLEGQTQVAENPHSEYGLTDN. The residue at position 19 (Ser-19) is a Phosphoserine. The residue at position 35 (Lys-35) is an N6-acetyllysine; alternate. Lys-35 is covalently cross-linked (Glycyl lysine isopeptide (Lys-Gly) (interchain with G-Cter in SUMO2); alternate).

Belongs to the dpy-30 family. As to quaternary structure, homodimer. Core component of several methyltransferase-containing complexes including MLL1/MLL, MLL2/3 (also named ASCOM complex) and MLL4/WBP7. Each complex is at least composed of ASH2L, RBBP5, WDR5, DPY30, one or more specific histone methyltransferases (KMT2A/MLL1, KMT2D/MLL2, KMT2C/MLL3 and KMT2B/MLL4), and the facultative components MEN1, HCFC1, HCFC2, NCOA6, KDM6A, PAXIP1/PTIP, PAGR1 and alpha- and beta-tubulin. Interacts with ASH2L; the interaction is direct. Interacts with ARFGEF1. Component of the SET1 complex, at least composed of the catalytic subunit (SETD1A or SETD1B), WDR5, WDR82, RBBP5, ASH2L/ASH2, CXXC1/CFP1, HCFC1 and DPY30.

It is found in the nucleus. The protein resides in the golgi apparatus. It localises to the trans-Golgi network. Its function is as follows. As part of the MLL1/MLL complex, involved in the methylation of histone H3 at 'Lys-4', particularly trimethylation. Histone H3 'Lys-4' methylation represents a specific tag for epigenetic transcriptional activation. May play some role in histone H3 acetylation. In embryonic stem cells, may play a crucial role in retinoic acid-induced differentiation along the neural lineage, regulating gene induction and H3 'Lys-4' methylation at key developmental loci. May also play an indirect or direct role in endosomal transport. This is Protein dpy-30 homolog (DPY30) from Bos taurus (Bovine).